The following is a 527-amino-acid chain: GMP synthase [glutamine-hydrolyzing] (527 aa).

Positions 4 to 202 constitute a Glutamine amidotransferase type-1 domain; the sequence is KILILDFGSQ…VLKICGAQPD (199 aa). The Nucleophile role is filled by Cys81. Catalysis depends on residues His176 and Glu178. One can recognise a GMPS ATP-PPase domain in the interval 203 to 395; that stretch reads WEMGHYIDEA…LGLPPAMVYR (193 aa). 230 to 236 contributes to the ATP binding site; it reads SGGVDSS.

As to quaternary structure, homodimer.

The catalysed reaction is XMP + L-glutamine + ATP + H2O = GMP + L-glutamate + AMP + diphosphate + 2 H(+). It participates in purine metabolism; GMP biosynthesis; GMP from XMP (L-Gln route): step 1/1. Its function is as follows. Catalyzes the synthesis of GMP from XMP. The polypeptide is GMP synthase [glutamine-hydrolyzing] (Paraburkholderia xenovorans (strain LB400)).